Here is a 364-residue protein sequence, read N- to C-terminus: S-adenosylmethionine:tRNA ribosyltransferase-isomerase (364 aa).

Belongs to the QueA family. As to quaternary structure, monomer.

It is found in the cytoplasm. The enzyme catalyses 7-aminomethyl-7-carbaguanosine(34) in tRNA + S-adenosyl-L-methionine = epoxyqueuosine(34) in tRNA + adenine + L-methionine + 2 H(+). The protein operates within tRNA modification; tRNA-queuosine biosynthesis. Functionally, transfers and isomerizes the ribose moiety from AdoMet to the 7-aminomethyl group of 7-deazaguanine (preQ1-tRNA) to give epoxyqueuosine (oQ-tRNA). The sequence is that of S-adenosylmethionine:tRNA ribosyltransferase-isomerase from Bradyrhizobium sp. (strain ORS 278).